The primary structure comprises 89 residues: Small ribosomal subunit protein bS16 (89 aa).

It belongs to the bacterial ribosomal protein bS16 family.

The polypeptide is Small ribosomal subunit protein bS16 (Chloroflexus aggregans (strain MD-66 / DSM 9485)).